Here is a 133-residue protein sequence, read N- to C-terminus: ATP synthase epsilon chain (133 aa).

The protein belongs to the ATPase epsilon chain family. In terms of assembly, F-type ATPases have 2 components, CF(1) - the catalytic core - and CF(0) - the membrane proton channel. CF(1) has five subunits: alpha(3), beta(3), gamma(1), delta(1), epsilon(1). CF(0) has three main subunits: a, b and c.

The protein resides in the cell inner membrane. Its function is as follows. Produces ATP from ADP in the presence of a proton gradient across the membrane. This Maricaulis maris (strain MCS10) (Caulobacter maris) protein is ATP synthase epsilon chain.